The chain runs to 301 residues: MTKKEKIIVIVGPTAVGKTALGIQVAQAFNGEIISGDSQQVYCHLDIGTAKASQEEQESAVHHLIDIRDVTQNYSAFDFVQDALEAIKDILSRGKIPIIVGGTGLYIQSLLEGYHLGGNLDQSALLAYRQELESLSDEALLDLMAEKNISLKEWTRRRAIRAIELDRFGKDLQNQEFPYEFMLIGLNDDRSYIYERINQRVDQMLEMGLIEEAKWLYEHYPQVQASRGIGYKELFPYFEGEISLEEASQNLKQNTRRFAKRQLTWFRNRMDVTFYPISEESYPIRIINDIKIFLENKAQDD.

Residue 12–19 (GPTAVGKT) participates in ATP binding. 14–19 (TAVGKT) lines the substrate pocket. The segment at 37–40 (DSQQ) is interaction with substrate tRNA.

This sequence belongs to the IPP transferase family. As to quaternary structure, monomer. Mg(2+) serves as cofactor.

It carries out the reaction adenosine(37) in tRNA + dimethylallyl diphosphate = N(6)-dimethylallyladenosine(37) in tRNA + diphosphate. Functionally, catalyzes the transfer of a dimethylallyl group onto the adenine at position 37 in tRNAs that read codons beginning with uridine, leading to the formation of N6-(dimethylallyl)adenosine (i(6)A). This is tRNA dimethylallyltransferase from Streptococcus uberis (strain ATCC BAA-854 / 0140J).